The primary structure comprises 89 residues: Small ribosomal subunit protein uS15 (89 aa).

The segment at 1–23 (MSLDTTEKQQLINANQTHGTDTG) is disordered. The span at 8-23 (KQQLINANQTHGTDTG) shows a compositional bias: polar residues.

The protein belongs to the universal ribosomal protein uS15 family. In terms of assembly, part of the 30S ribosomal subunit. Forms a bridge to the 50S subunit in the 70S ribosome, contacting the 23S rRNA.

Its function is as follows. One of the primary rRNA binding proteins, it binds directly to 16S rRNA where it helps nucleate assembly of the platform of the 30S subunit by binding and bridging several RNA helices of the 16S rRNA. In terms of biological role, forms an intersubunit bridge (bridge B4) with the 23S rRNA of the 50S subunit in the ribosome. The polypeptide is Small ribosomal subunit protein uS15 (Prochlorococcus marinus (strain MIT 9313)).